Consider the following 239-residue polypeptide: tRNA (guanine-N(7)-)-methyltransferase (239 aa).

Positions 69, 94, 121, and 144 each coordinate S-adenosyl-L-methionine. The active site involves Asp-144. Lys-148 contacts substrate. An interaction with RNA region spans residues 150–155; it reads RHNKRR. Substrate is bound by residues Asp-180 and 217 to 220; that span reads TKFE.

This sequence belongs to the class I-like SAM-binding methyltransferase superfamily. TrmB family. Monomer.

The catalysed reaction is guanosine(46) in tRNA + S-adenosyl-L-methionine = N(7)-methylguanosine(46) in tRNA + S-adenosyl-L-homocysteine. Its pathway is tRNA modification; N(7)-methylguanine-tRNA biosynthesis. In terms of biological role, catalyzes the formation of N(7)-methylguanine at position 46 (m7G46) in tRNA. This chain is tRNA (guanine-N(7)-)-methyltransferase, found in Shigella flexneri serotype 5b (strain 8401).